Consider the following 222-residue polypeptide: Dihydrophenazinedicarboxylate synthase (222 aa).

Substrate is bound at residue S18. Residues 73–76 (RIVV) and 88–89 (ST) contribute to the FMN site. Residue H90 participates in substrate binding. FMN contacts are provided by residues 94–95 (QK) and Q117. Residues R139 and S147 each contribute to the substrate site. Residues 152–153 (QS) and R205 each bind FMN.

It belongs to the pyridoxamine 5'-phosphate oxidase family. FMN is required as a cofactor.

The catalysed reaction is (1R,6R)-1,4,5,5a,6,9-hexahydrophenazine-1,6-dicarboxylate + O2 = (1R,10aS)-1,4,10,10a-tetrahydrophenazine-1,6-dicarboxylate + H2O2. It carries out the reaction (1R,10aS)-1,4,10,10a-tetrahydrophenazine-1,6-dicarboxylate + O2 = (5aS)-5,5a-dihydrophenazine-1,6-dicarboxylate + H2O2. The enzyme catalyses (1R,10aS)-1,4,10,10a-tetrahydrophenazine-1-carboxylate + O2 = (10aS)-10,10a-dihydrophenazine-1-carboxylate + H2O2. It catalyses the reaction (1R)-1,4,5,10-tetrahydrophenazine-1-carboxylate + O2 = (10aS)-10,10a-dihydrophenazine-1-carboxylate + H2O2. Its pathway is antibiotic biosynthesis; phenazine biosynthesis. Functionally, involved in the biosynthesis of the antibiotic phenazine, a nitrogen-containing heterocyclic molecule having important roles in virulence, competition and biological control. Catalyzes several oxidations in the terminal steps of core phenazine biosynthesis. It oxidizes both hexahydrophenazine-1,6-dicarboxylic acid (HHPDC) and tetrahydrophenazine-1-carboxylic acid (THPCA) and thereby contributes to the generation of both phenazine-1,6-dicarboxylic acid (PDC) and phenazine-1-carboxylic acid (PCA). This is Dihydrophenazinedicarboxylate synthase from Pseudomonas chlororaphis (Pseudomonas aureofaciens).